The following is a 475-amino-acid chain: Aspartyl/glutamyl-tRNA(Asn/Gln) amidotransferase subunit B (475 aa).

It belongs to the GatB/GatE family. GatB subfamily. In terms of assembly, heterotrimer of A, B and C subunits.

It carries out the reaction L-glutamyl-tRNA(Gln) + L-glutamine + ATP + H2O = L-glutaminyl-tRNA(Gln) + L-glutamate + ADP + phosphate + H(+). It catalyses the reaction L-aspartyl-tRNA(Asn) + L-glutamine + ATP + H2O = L-asparaginyl-tRNA(Asn) + L-glutamate + ADP + phosphate + 2 H(+). Allows the formation of correctly charged Asn-tRNA(Asn) or Gln-tRNA(Gln) through the transamidation of misacylated Asp-tRNA(Asn) or Glu-tRNA(Gln) in organisms which lack either or both of asparaginyl-tRNA or glutaminyl-tRNA synthetases. The reaction takes place in the presence of glutamine and ATP through an activated phospho-Asp-tRNA(Asn) or phospho-Glu-tRNA(Gln). In Mycoplasma mobile (strain ATCC 43663 / 163K / NCTC 11711) (Mesomycoplasma mobile), this protein is Aspartyl/glutamyl-tRNA(Asn/Gln) amidotransferase subunit B.